Consider the following 710-residue polypeptide: E3 ubiquitin-protein ligase TRIM9 (710 aa).

The segment at 10–50 adopts an RING-type zinc-finger fold; sequence CPVCGSFYREPIILPCSHNLCQACARNILVQTPESESPQSR. T41 is modified (phosphothreonine). S44, S46, S49, and S53 each carry phosphoserine. 2 B box-type zinc fingers span residues 163–212 and 224–266; these read AAAL…LVPP and RKVS…VKAL. Residues C168, C171, C193, H198, C229, H232, C252, and H258 each contribute to the Zn(2+) site. Residues 273 to 340 adopt a coiled-coil conformation; the sequence is HKSQLSQALN…KAQLLARVNK (68 aa). Residues 374–432 form the COS domain; sequence IKENDPSGFLQISDALIRRVHLTEDQWGKGTLTPRMTTDFDLSLDNSPLLQSIHQLDFV. The region spanning 440 to 535 is the Fibronectin type-III domain; sequence VPATPILQLE…KTLVLQTSEV (96 aa). The 170-residue stretch at 533–702 folds into the B30.2/SPRY domain; the sequence is SEVAWFAFDP…LHTGLPVPDF (170 aa).

Interacts with SNAP25. In terms of processing, auto-ubiquitinated. In terms of tissue distribution, brain (at protein level). Expressed in fetal and adult brain.

The protein localises to the cytoplasmic vesicle. Its subcellular location is the secretory vesicle. It localises to the synaptic vesicle. The protein resides in the synapse. It is found in the cytoplasm. The protein localises to the cytoskeleton. Its subcellular location is the cell projection. It localises to the dendrite. The enzyme catalyses S-ubiquitinyl-[E2 ubiquitin-conjugating enzyme]-L-cysteine + [acceptor protein]-L-lysine = [E2 ubiquitin-conjugating enzyme]-L-cysteine + N(6)-ubiquitinyl-[acceptor protein]-L-lysine.. Its pathway is protein modification; protein ubiquitination. E3 ubiquitin-protein ligase which ubiquitinates itself in cooperation with an E2 enzyme UBE2D2/UBC4 and serves as a targeting signal for proteasomal degradation. May play a role in regulation of neuronal functions. May act as a regulator of synaptic vesicle exocytosis by controlling the availability of SNAP25 for the SNARE complex formation. The polypeptide is E3 ubiquitin-protein ligase TRIM9 (Trim9) (Rattus norvegicus (Rat)).